Reading from the N-terminus, the 985-residue chain is Regulator of telomere elongation helicase 1 homolog (985 aa).

One can recognise a Helicase ATP-binding domain in the interval alanine 7–aspartate 303. Serine 42–threonine 49 provides a ligand contact to ATP. [4Fe-4S] cluster is bound by residues cysteine 146, cysteine 164, cysteine 173, and cysteine 209. The short motif at aspartate 252–histidine 255 is the DEAH box element. The segment at valine 863–threonine 883 is disordered. The span at serine 872–valine 882 shows a compositional bias: polar residues. At threonine 874 the chain carries Phosphothreonine.

The protein belongs to the helicase family. RAD3/XPD subfamily. Expressed in both male germline and somatic cells (at protein level). Expressed in ovarian germline stem cells (at protein level). Expressed in adult testes (at protein level). Expressed in the germarium including germline stem cells.

It is found in the nucleus. It localises to the chromosome. The catalysed reaction is ATP + H2O = ADP + phosphate + H(+). Functionally, a probable ATP-dependent DNA helicase implicated in DNA repair and the maintenance of genomic stability. Acts as an anti-recombinase to counteract toxic recombination and limit crossover during meiosis. Regulates meiotic recombination and crossover homeostasis by physically dissociating strand invasion events and thereby promotes noncrossover repair by meiotic synthesis dependent strand annealing (SDSA) as well as disassembly of D loop recombination intermediates. In male germline stem cells (GSCs), plays a role in GSCs maintenance during larval germline development by modulating the expression of genes such as Stat92E and preventing DNA damage-induced checkpoint activation. May play a role in female germline stem cell maintenance. This chain is Regulator of telomere elongation helicase 1 homolog, found in Drosophila melanogaster (Fruit fly).